Reading from the N-terminus, the 670-residue chain is Solute carrier organic anion transporter family member 1A6 (670 aa).

The Cytoplasmic portion of the chain corresponds to 1 to 20 (MGEPGKRVGIHRVRCFAKIK). The helical transmembrane segment at 21–40 (VFLLALIWAYISKILSGVYM) threads the bilayer. Residues 41–59 (STMLTQLERQFNISTSIVG) lie on the Extracellular side of the membrane. Residue Asn52 is glycosylated (N-linked (GlcNAc...) asparagine). A helical membrane pass occupies residues 60–80 (LINGSFEMGNLLVIVFVSYFG). Residues 81–86 (TKLHRP) lie on the Cytoplasmic side of the membrane. A helical membrane pass occupies residues 87-111 (IMIGVGCAVMGLGCFIISLPHFLMG). Residues 112–155 (RYEYETTISPTSNLSSNSFLCVENRSQTLKPTQDPAECVKEIKS) are Extracellular-facing. N-linked (GlcNAc...) asparagine glycans are attached at residues Asn124 and Asn135. The chain crosses the membrane as a helical span at residues 156–184 (LMWIYVLVGNIIRGIGETPIMPLGISYIE). Over 185-203 (DFAKSENSPLYIGILEVGK) the chain is Cytoplasmic. The chain crosses the membrane as a helical span at residues 204–224 (MIGPILGYLMGPFCANIYVDT). The Extracellular portion of the chain corresponds to 225 to 242 (GSVNTDDLTITPTDTRWV). Residues 243 to 267 (GAWWIGFLVCAGVNVLTSIPFFFFP) traverse the membrane as a helical segment. At 268–311 (KTLPKEGLQDNGDGTENAKEEKHRDKAKEENQGIIKEFFLMMKN) the chain is on the cytoplasmic side. Residues 312–333 (LFCNPIYMLCVLTSVLQVNGVA) form a helical membrane-spanning segment. Residues 334-353 (NIVIYKPKYLEHHFGISTAK) are Extracellular-facing. Residues 354 to 377 (AVFLIGLYTTPSVSAGYLISGFIM) form a helical membrane-spanning segment. Residues 378–381 (KKLK) are Cytoplasmic-facing. The chain crosses the membrane as a helical span at residues 382–405 (ITLKKAAIIALCLFMSECLLSLCN). The Extracellular portion of the chain corresponds to 406 to 513 (FMLTCDTTPI…PDCANKLQYF (108 aa)). A Kazal-like domain is found at 433-488 (NKFLSDCNTRCNCLTKTWDPVCGNNGLAYMSPCLAGCEKSVGTGANMVFQNCSCIR). Cystine bridges form between Cys439–Cys469, Cys445–Cys465, and Cys454–Cys486. Asn483 and Asn492 each carry an N-linked (GlcNAc...) asparagine glycan. Residues 514–536 (LIITVFCCFFYSLATIPGYMVFL) form a helical membrane-spanning segment. At 537-545 (RCMKSEEKS) the chain is on the cytoplasmic side. The chain crosses the membrane as a helical span at residues 546 to 571 (LGIGLQAFFMRLFAGIPAPIYFGALI). Residues 572–605 (DRTCLHWGTLKCGEPGACRTYEVSSFRRLYLGLP) are Extracellular-facing. A helical transmembrane segment spans residues 606 to 623 (AALRGSIILPSFFILRLI). Over 624 to 670 (RKLQIPGDTDSSEIELAETKPTEKESECTDMHKSSKVENDGELKTKL) the chain is Cytoplasmic. Thr632 carries the post-translational modification Phosphothreonine. A disordered region spans residues 633-670 (DSSEIELAETKPTEKESECTDMHKSSKVENDGELKTKL). Ser634 and Ser635 each carry phosphoserine. Residues 640-670 (AETKPTEKESECTDMHKSSKVENDGELKTKL) show a composition bias toward basic and acidic residues.

This sequence belongs to the organo anion transporter (TC 2.A.60) family. Kidney specific.

The protein resides in the cell membrane. May mediate the Na(+)-independent transport of organic anions. In Mus musculus (Mouse), this protein is Solute carrier organic anion transporter family member 1A6 (Slco1a6).